Here is a 215-residue protein sequence, read N- to C-terminus: Chaperone protein TorD (215 aa).

Belongs to the TorD/DmsD family. TorD subfamily.

The protein localises to the cytoplasm. Its function is as follows. Involved in the biogenesis of TorA. Acts on TorA before the insertion of the molybdenum cofactor and, as a result, probably favors a conformation of the apoenzyme that is competent for acquiring the cofactor. This is Chaperone protein TorD from Vibrio vulnificus (strain CMCP6).